Consider the following 366-residue polypeptide: Molybdenum import ATP-binding protein ModC (366 aa).

In terms of domain architecture, ABC transporter spans 1–231 (MSEVILQLQK…KAMRPWQSFS (231 aa)). ATP is bound at residue 33-40 (GRSGAGKT). The region spanning 292-361 (ASSIRNILPA…IKGVSVAQRD (70 aa)) is the Mop domain.

This sequence belongs to the ABC transporter superfamily. Molybdate importer (TC 3.A.1.8) family. In terms of assembly, the complex is composed of two ATP-binding proteins (ModC), two transmembrane proteins (ModB) and a solute-binding protein (ModA).

It is found in the cell inner membrane. The enzyme catalyses molybdate(out) + ATP + H2O = molybdate(in) + ADP + phosphate + H(+). Functionally, part of the ABC transporter complex ModABC involved in molybdenum import. Responsible for energy coupling to the transport system. In Vibrio cholerae serotype O1 (strain ATCC 39315 / El Tor Inaba N16961), this protein is Molybdenum import ATP-binding protein ModC.